The chain runs to 317 residues: Melanocyte-stimulating hormone receptor (317 aa).

Residues 1–28 (MPMQGAQGRLRGSLNATPPTTPHSGLAG) are disordered. The Extracellular segment spans residues 1 to 37 (MPMQGAQGRLRGSLNATPPTTPHSGLAGNQTGPWCLE). A glycan (N-linked (GlcNAc...) asparagine) is linked at asparagine 29. A helical membrane pass occupies residues 38-63 (VSIPDELFLSLGLVSLVENMLVVAAI). Residues 64-72 (AKNRNLHSP) are Cytoplasmic-facing. Residues 73–93 (MYYFICCLAVSDLLVSVSNVL) form a helical membrane-spanning segment. Over 94 to 118 (ETAVMLLLEAGVLAAWAGVVQQLDN) the chain is Extracellular. The helical transmembrane segment at 119–140 (AIDVFICGSMVSSLCFLGAIAV) threads the bilayer. Residues 141-163 (DRYITIFYALRYHSIVTLPRARW) are Cytoplasmic-facing. Residues 164-183 (AIATIWAASVVCSTLFIAYY) form a helical membrane-spanning segment. The Extracellular segment spans residues 184–191 (DCTAVLLC). The helical transmembrane segment at 192–211 (LVSFFLALVVLMAVLYMHML) threads the bilayer. The Cytoplasmic segment spans residues 212–240 (ARACLHARSIARLHKRWRPVHQGLGLKGA). A helical membrane pass occupies residues 241–266 (ATLSILLGSFFLCWGPFFLHLTLIVL). Residues 267-279 (CPQHPTCSCVFKN) lie on the Extracellular side of the membrane. The helical transmembrane segment at 280-300 (FKLFLTLIICNSIVDPLIYAF) threads the bilayer. Residues 301–317 (RSQELRKTLKEVLLCSW) are Cytoplasmic-facing. Cysteine 315 is lipidated: S-palmitoyl cysteine.

Belongs to the G-protein coupled receptor 1 family. Interacts with MGRN1, but does not undergo MGRN1-mediated ubiquitination; this interaction competes with GNAS-binding and thus inhibits agonist-induced cAMP production. Interacts with OPN3; the interaction results in a decrease in MC1R-mediated cAMP signaling and ultimately a decrease in melanin production in melanocytes.

It is found in the cell membrane. Receptor for MSH (alpha, beta and gamma) and ACTH. The activity of this receptor is mediated by G proteins which activate adenylate cyclase. Mediates melanogenesis, the production of eumelanin (black/brown) and phaeomelanin (red/yellow), via regulation of cAMP signaling in melanocytes. This Mammuthus primigenius (Siberian woolly mammoth) protein is Melanocyte-stimulating hormone receptor (MC1R).